A 365-amino-acid chain; its full sequence is MLTRRNAKQSQRNSADQSLSEFNSSSMTHGSNQSVYHHNQHMDDSEMMMDEQDYSQYQMGFPEEDEMVEGMMTPRAVHQCNVCNKIFVSYKGLQQHAVIHTDQKPFRCDICSKSFRFKSNLFEHRSVHTGFTPHACPYCGKTCRLKGNLKKHLRTHVTTKEELEAAWRPFASNRRPPADIPDDAIVLRGAGGPYYTPPPRPKKKKLGLGEPEHWVDKLRRGDLLPQVELEDKIRRLEDTIFNNMSLERWGNLFEIAKSIAFETHDCPVCKSQFMTRMDCVSHHTLEHENHREGLEFFCEKCYRPFADEASYNQHMSYHTRVSSLIETGEIVPQPADPEILVPTNDEFQMLFGANFGQQMMEPQLI.

The segment at 1-36 (MLTRRNAKQSQRNSADQSLSEFNSSSMTHGSNQSVY) is disordered. Polar residues predominate over residues 8–36 (KQSQRNSADQSLSEFNSSSMTHGSNQSVY). 5 C2H2-type zinc fingers span residues 78–100 (HQCNVCNKIFVSYKGLQQHAVIH), 106–128 (FRCDICSKSFRFKSNLFEHRSVH), 134–156 (HACPYCGKTCRLKGNLKKHLRTH), 264–287 (HDCPVCKSQFMTRMDCVSHHTLEH), and 296–318 (FFCEKCYRPFADEASYNQHMSYH).

The protein localises to the nucleus speckle. In terms of biological role, involved in transcriptional regulation. Required to specify left-right asymmetry of the ASE gustatory neurons, probably acting upstream of microRNA lsy-6. Involved in maintaining the distinction between somatic and germ cells, perhaps acting by repressing germ cell-specific genes in somatic cells. The chain is Zinc finger protein lsy-2 from Caenorhabditis elegans.